A 378-amino-acid chain; its full sequence is Acid phosphatase-like protein XcAP-2 (378 aa).

Residues 1–19 (MKTTILLLVVLTIVQLSKA) form the signal peptide. Disulfide bonds link Cys147/Cys374, Cys168/Cys220, and Cys347/Cys351.

The protein belongs to the histidine acid phosphatase family.

It is found in the secreted. In terms of biological role, probably modulates blood feeding of fleas on vertebrate species by binding and sequestering different mediators involved in the host response. Binds histamine. Binds leukotriene B4, leukotriene C4, leukotriene D4 and leukotriene E4. Does not bind serotonin, adrenaline, noradrenaline, ADP, and stable analogs of thromboxane A2: U-46619 and cTXA2. The sequence is that of Acid phosphatase-like protein XcAP-2 from Xenopsylla cheopis (Oriental rat flea).